Reading from the N-terminus, the 274-residue chain is THAP domain-containing protein 8 (274 aa).

The THAP-type zinc-finger motif lies at 1–85 (MPKYCRAPNC…LRPDAVPSIF (85 aa)). Positions 83-121 (SIFSRGPPAKSQRRTRSTQKPVSPPPPLQKNTPLPQSPA) are disordered.

In Homo sapiens (Human), this protein is THAP domain-containing protein 8 (THAP8).